Consider the following 575-residue polypeptide: Transcription factor E3 (575 aa).

Residue serine 47 is modified to Phosphoserine; by MTOR. Over residues alanine 90 to glutamine 126 the composition is skewed to low complexity. The disordered stretch occupies residues alanine 90–serine 153. Residues glutamate 127–glutamine 136 show a composition bias toward basic and acidic residues. Position 188 is an asymmetric dimethylarginine (arginine 188). The segment at leucine 211–serine 246 is disordered. The interval glutamate 260–leucine 271 is strong transcription activation domain. Serine 321 carries the phosphoserine; by MTOR modification. A Glycyl lysine isopeptide (Lys-Gly) (interchain with G-Cter in SUMO2) cross-link involves residue lysine 339. The region spanning glutamine 346–leucine 399 is the bHLH domain. Residues arginine 356–arginine 359 carry the Nuclear localization signal motif. Residues leucine 409–leucine 430 are leucine-zipper. Disordered regions lie at residues glycine 473–aspartate 498 and glycine 534–serine 575. Residues glycine 539–serine 575 show a composition bias toward low complexity. Serine 542, serine 548, serine 554, serine 556, serine 560, and serine 568 each carry phosphoserine.

It belongs to the MiT/TFE family. As to quaternary structure, homodimer and heterodimer; with TFEB or MITF. Interacts with RRAGC/RagC GDP-bound and RRAGD/RagD GDP-bound; promoting its recruitment to lysosomal membrane in the presence of nutrients. Interacts with TSC22D1; the interaction is enhanced in the presence of TGF-beta. Post-translationally, sumoylated; does not affect dimerization with MITF. Phosphorylation ar Ser-47 and Ser-321 by MTOR via non-canonical mTORC1 pathway regulates its stability and subcellular location, respectively. When nutrients are present, phosphorylation by MTOR at Ser-47 promotes ubiquitination by the SCF(BTRC) complex, followed by degradation. When nutrients are present, phosphorylation by MTOR at Ser-321 also promotes association with 14-3-3/YWHA adapters and retention in the cytosol. Phosphorylation at Ser-47 plays a more critical role than phosphorylation at Ser-321 for TFE3 inactivation. Inhibition of mTORC1, starvation and lysosomal disruption, promotes dephosphorylation and transcription factor activity. In terms of processing, ubiquitinated by the SCF(BTRC) and SCF(FBXW11) complexes following phosphorylation at Ser-47 by MTOR, leading to its degradation by the proteasome. Ubiquitous in fetal and adult tissues.

It localises to the cytoplasm. Its subcellular location is the cytosol. The protein localises to the nucleus. The protein resides in the lysosome membrane. Transcription factor that acts as a master regulator of lysosomal biogenesis and immune response. Specifically recognizes and binds E-box sequences (5'-CANNTG-3'); efficient DNA-binding requires dimerization with itself or with another MiT/TFE family member such as TFEB or MITF. Involved in the cellular response to amino acid availability by acting downstream of MTOR: in the presence of nutrients, TFE3 phosphorylation by MTOR promotes its inactivation. Upon starvation or lysosomal stress, inhibition of MTOR induces TFE3 dephosphorylation, resulting in transcription factor activity. Specifically recognizes and binds the CLEAR-box sequence (5'-GTCACGTGAC-3') present in the regulatory region of many lysosomal genes, leading to activate their expression, thereby playing a central role in expression of lysosomal genes. Maintains the pluripotent state of embryonic stem cells by promoting the expression of genes such as ESRRB; mTOR-dependent TFE3 cytosolic retention and inactivation promotes exit from pluripotency. Required to maintain the naive pluripotent state of hematopoietic stem cell; mTOR-dependent cytoplasmic retention of TFE3 promotes the exit of hematopoietic stem cell from pluripotency. TFE3 activity is also involved in the inhibition of neuronal progenitor differentiation. Acts as a positive regulator of browning of adipose tissue by promoting expression of target genes; mTOR-dependent phosphorylation promotes cytoplasmic retention of TFE3 and inhibits browning of adipose tissue. In association with TFEB, activates the expression of CD40L in T-cells, thereby playing a role in T-cell-dependent antibody responses in activated CD4(+) T-cells and thymus-dependent humoral immunity. Specifically recognizes the MUE3 box, a subset of E-boxes, present in the immunoglobulin enhancer. It also binds very well to a USF/MLTF site. Promotes TGF-beta-induced transcription of COL1A2; via its interaction with TSC22D1 at E-boxes in the gene proximal promoter. May regulate lysosomal positioning in response to nutrient deprivation by promoting the expression of PIP4P1. In Homo sapiens (Human), this protein is Transcription factor E3.